A 462-amino-acid polypeptide reads, in one-letter code: MGKTLFDKLWNRHVIYGKEGEPQLLYVDLHLIHEVTSPQAFEGLRMENRPLRRPDKTFATMDHNVPTEDIFNIQDLVAKKQIEALQTNCAEFGVTLADMGSDRQGIVHMVGPETGLTQPGKVIVCGDSHTATHGAFGAIGFGIGSSEVEHVFATQTIWQQKPKSMGIEIKGKLPKGVYAKDIILHLIATYGVAFGTGYAVEYYGETIQNMSMEERMTICNMAIEGGAKMGMMAPDETTFEYVRGREYAPTDMEKAISDWKTLQTDPDAEYDLHIEMDASTLEPYVTWGTNPEMGVPFSRAFPEIKDMNYERAYEYMGLKPGQKAEQIELGYVFIGSCTNARLSDLEEAARIVKGNKVKNNIRALVVPGSRQVRNAAESIGLDKIFIAAGFEWREPGCSMCLGMNPDQVPDGVHCASTSNRNFEGRQGKGARTHLVSPAMAAAAAINGHFIDIRKEAVISGGN.

[4Fe-4S] cluster is bound by residues Cys-337, Cys-397, and Cys-400.

It belongs to the aconitase/IPM isomerase family. LeuC type 1 subfamily. Heterodimer of LeuC and LeuD. [4Fe-4S] cluster serves as cofactor.

It carries out the reaction (2R,3S)-3-isopropylmalate = (2S)-2-isopropylmalate. The protein operates within amino-acid biosynthesis; L-leucine biosynthesis; L-leucine from 3-methyl-2-oxobutanoate: step 2/4. Functionally, catalyzes the isomerization between 2-isopropylmalate and 3-isopropylmalate, via the formation of 2-isopropylmaleate. In Listeria welshimeri serovar 6b (strain ATCC 35897 / DSM 20650 / CCUG 15529 / CIP 8149 / NCTC 11857 / SLCC 5334 / V8), this protein is 3-isopropylmalate dehydratase large subunit.